The primary structure comprises 143 residues: Putative pre-16S rRNA nuclease (143 aa).

Belongs to the YqgF nuclease family.

The protein resides in the cytoplasm. In terms of biological role, could be a nuclease involved in processing of the 5'-end of pre-16S rRNA. This is Putative pre-16S rRNA nuclease from Lactobacillus johnsonii (strain CNCM I-12250 / La1 / NCC 533).